A 100-amino-acid polypeptide reads, in one-letter code: Aspartyl/glutamyl-tRNA(Asn/Gln) amidotransferase subunit C (100 aa).

This sequence belongs to the GatC family. As to quaternary structure, heterotrimer of A, B and C subunits.

It catalyses the reaction L-glutamyl-tRNA(Gln) + L-glutamine + ATP + H2O = L-glutaminyl-tRNA(Gln) + L-glutamate + ADP + phosphate + H(+). It carries out the reaction L-aspartyl-tRNA(Asn) + L-glutamine + ATP + H2O = L-asparaginyl-tRNA(Asn) + L-glutamate + ADP + phosphate + 2 H(+). Its function is as follows. Allows the formation of correctly charged Asn-tRNA(Asn) or Gln-tRNA(Gln) through the transamidation of misacylated Asp-tRNA(Asn) or Glu-tRNA(Gln) in organisms which lack either or both of asparaginyl-tRNA or glutaminyl-tRNA synthetases. The reaction takes place in the presence of glutamine and ATP through an activated phospho-Asp-tRNA(Asn) or phospho-Glu-tRNA(Gln). The polypeptide is Aspartyl/glutamyl-tRNA(Asn/Gln) amidotransferase subunit C (Janthinobacterium sp. (strain Marseille) (Minibacterium massiliensis)).